The sequence spans 120 residues: NAD(P)H-quinone oxidoreductase subunit 3, chloroplastic (120 aa).

Transmembrane regions (helical) follow at residues 9–29, 64–84, and 88–108; these read IFWAFLLISSAIPVLAFLISG, MFALVFVVFDVETVFLYPWAM, and VLGVSAFIEAFIFVLILILGL.

This sequence belongs to the complex I subunit 3 family. In terms of assembly, NDH is composed of at least 16 different subunits, 5 of which are encoded in the nucleus.

It localises to the plastid. It is found in the chloroplast thylakoid membrane. It catalyses the reaction a plastoquinone + NADH + (n+1) H(+)(in) = a plastoquinol + NAD(+) + n H(+)(out). It carries out the reaction a plastoquinone + NADPH + (n+1) H(+)(in) = a plastoquinol + NADP(+) + n H(+)(out). In terms of biological role, NDH shuttles electrons from NAD(P)H:plastoquinone, via FMN and iron-sulfur (Fe-S) centers, to quinones in the photosynthetic chain and possibly in a chloroplast respiratory chain. The immediate electron acceptor for the enzyme in this species is believed to be plastoquinone. Couples the redox reaction to proton translocation, and thus conserves the redox energy in a proton gradient. The protein is NAD(P)H-quinone oxidoreductase subunit 3, chloroplastic of Arabidopsis thaliana (Mouse-ear cress).